Reading from the N-terminus, the 507-residue chain is Methionine--tRNA ligase (507 aa).

A 'HIGH' region motif is present at residues 12–22 (YYVNDVSHIGH). The 'KMSKS' region signature appears at 295 to 299 (KISKS). Residue K298 participates in ATP binding.

Belongs to the class-I aminoacyl-tRNA synthetase family. MetG type 2B subfamily. As to quaternary structure, monomer.

It localises to the cytoplasm. It carries out the reaction tRNA(Met) + L-methionine + ATP = L-methionyl-tRNA(Met) + AMP + diphosphate. Is required not only for elongation of protein synthesis but also for the initiation of all mRNA translation through initiator tRNA(fMet) aminoacylation. The polypeptide is Methionine--tRNA ligase (Rickettsia typhi (strain ATCC VR-144 / Wilmington)).